The primary structure comprises 310 residues: Olfactory receptor 10G2 (310 aa).

At 1-29 (MGKTKNTSLDAVVTDFILLGLSHPPNLRS) the chain is on the extracellular side. N6 is a glycosylation site (N-linked (GlcNAc...) asparagine). Residues 30–50 (LLFLVFFIIYILTQLGNLLIL) traverse the membrane as a helical segment. Topologically, residues 51-58 (LTMWADPK) are cytoplasmic. Residues 59 to 80 (LCARPMYILLGVLSFLDMWLSS) form a helical membrane-spanning segment. Residues 81-104 (VTVPLLILDFTPSIKAIPFGGCVA) are Extracellular-facing. Cysteines 102 and 194 form a disulfide. The helical transmembrane segment at 105 to 125 (QLYFFHFLGSTQCFLYTLMAY) threads the bilayer. Topologically, residues 126 to 144 (DRYLAICQPLRYPVLMNGR) are cytoplasmic. The chain crosses the membrane as a helical span at residues 145-165 (LCTVLVAGAWVAGSMHGSIQA). At 166-202 (TLTFRLPYCGPNQVDYFICDIPAVLRLACADTTVNEL) the chain is on the extracellular side. The chain crosses the membrane as a helical span at residues 203 to 222 (VTFVDVGVVAASCFMLILLS). Residues 223 to 242 (YANIVNAILKIRTTDGRRRA) lie on the Cytoplasmic side of the membrane. A helical membrane pass occupies residues 243 to 263 (FSTCGSHLIVVTVYYVPCIFI). At 264–274 (YLRAGSKDPLD) the chain is on the extracellular side. A helical transmembrane segment spans residues 275–295 (GAAAVFYTVVTPLLNPLIYTL). The Cytoplasmic portion of the chain corresponds to 296 to 310 (RNQEVKSALKRITAG).

It belongs to the G-protein coupled receptor 1 family.

It is found in the cell membrane. Functionally, odorant receptor. This chain is Olfactory receptor 10G2 (OR10G2), found in Homo sapiens (Human).